Reading from the N-terminus, the 527-residue chain is Glucose-6-phosphate isomerase (527 aa).

Glu-323 serves as the catalytic Proton donor. Catalysis depends on residues His-352 and Lys-454.

This sequence belongs to the GPI family.

The protein resides in the cytoplasm. It catalyses the reaction alpha-D-glucose 6-phosphate = beta-D-fructose 6-phosphate. Its pathway is carbohydrate biosynthesis; gluconeogenesis. It participates in carbohydrate degradation; glycolysis; D-glyceraldehyde 3-phosphate and glycerone phosphate from D-glucose: step 2/4. In terms of biological role, catalyzes the reversible isomerization of glucose-6-phosphate to fructose-6-phosphate. This chain is Glucose-6-phosphate isomerase, found in Prochlorococcus marinus (strain MIT 9215).